Consider the following 691-residue polypeptide: tRNA-dihydrouridine(47) synthase [NAD(P)(+)]-like (691 aa).

An N-acetylserine modification is found at Ser-2. The segment at 55–94 is disordered; it reads PPPPSRSVKQNDAADVRAPQSGLVQEKKSKRQLKRERREQ. C3H1-type zinc fingers lie at residues 94 to 125 and 138 to 163; these read QSTINLCPQVARTEDVDSCQYKDKCRFNHDIE and QCPFVASGMKCAYGLSCRFLGSHRDI. The interval 259–286 is disordered; that stretch reads LETEEVRPMKKAKSEDQKNSKTGDVGGV. Residues 262 to 279 show a composition bias toward basic and acidic residues; it reads EEVRPMKKAKSEDQKNSK. Residues 344 to 346 and Gln-398 contribute to the FMN site; that span reads PLT. Cys-429 functions as the Proton donor in the catalytic mechanism. Residues Lys-468, His-498, 531 to 533, and 556 to 557 each bind FMN; these read NGD and AR.

It belongs to the Dus family. Dus3 subfamily. FMN serves as cofactor.

It carries out the reaction 5,6-dihydrouridine(47) in tRNA + NAD(+) = uridine(47) in tRNA + NADH + H(+). The enzyme catalyses 5,6-dihydrouridine(47) in tRNA + NADP(+) = uridine(47) in tRNA + NADPH + H(+). It catalyses the reaction a 5,6-dihydrouridine in mRNA + NAD(+) = a uridine in mRNA + NADH + H(+). The catalysed reaction is a 5,6-dihydrouridine in mRNA + NADP(+) = a uridine in mRNA + NADPH + H(+). Catalyzes the synthesis of dihydrouridine, a modified base found in the D-loop of most tRNAs. Specifically modifies U47 in cytoplasmic tRNAs. Catalyzes the synthesis of dihydrouridine in some mRNAs, thereby affecting their translation. The protein is tRNA-dihydrouridine(47) synthase [NAD(P)(+)]-like of Arabidopsis thaliana (Mouse-ear cress).